A 1196-amino-acid polypeptide reads, in one-letter code: NACHT, LRR and PYD domains-containing protein 1b allele 5 (1196 aa).

Residues 1-22 (MEESPPKQKSNTKVTQHEGQQD) are disordered. The NACHT domain maps to 126-435 (QLVIIEGAAG…EFFAAISCIL (310 aa)). Position 132 to 139 (132 to 139 (GAAGIGKS)) interacts with ATP. 2 LRR repeats span residues 627 to 647 (NLEG…QSLC) and 684 to 704 (SLTE…RMLC). The tract at residues 789–922 (FWGPTGPVAT…GYTVLKNPSF (134 aa)) is ZU5. An FIIND domain is found at 789 to 1072 (FWGPTGPVAT…KFDHLCDQEF (284 aa)). The tract at residues 923–1072 (SPMGVVLRII…KFDHLCDQEF (150 aa)) is UPA. The 84-residue stretch at 1106–1189 (HFMDQHREQL…HLVMDLFEKS (84 aa)) folds into the CARD domain.

Belongs to the NLRP family. As to quaternary structure, interacts with DPP9; leading to inhibit activation of the inflammasome. DPP9 acts via formation of a ternary complex, composed of a DPP9 homodimer, one full-length Nlrp1b protein, and one cleaved C-terminus of Nlrp1b (NACHT, LRR and PYD domains-containing protein 1b, C-terminus). Interacts with DPP8; leading to inhibit activation of the inflammasome, probably via formation of a ternary complex with DPP8. Interacts (via LRR repeats) with BCL2 and BCL2L1 (via the loop between motifs BH4 and BH3). Interacts with NOD2; this interaction may increase IL1B release. Interacts with EIF2AK2/PKR; this interaction requires EIF2AK2 activity, is accompanied by EIF2AK2 autophosphorylation and promotes inflammasome assembly in response to B.anthracis lethal toxin. Interacts with MEFV; this interaction targets Nlrp1b to degradation by autophagy, hence preventing excessive IL1B- and IL18-mediated inflammation. In terms of assembly, interacts with the C-terminal part of Nlrp1b (NACHT, LRR and PYD domains-containing protein 1b, C-terminus) in absence of pathogens and other damage-associated signals. Interacts with the N-terminal part of Nlrp1b (NACHT, LRR and PYD domains-containing protein 1b, N-terminus) in absence of pathogens and other damage-associated signals. Homomultimer; forms the Nlrp1b inflammasome polymeric complex, a filament composed of homopolymers of this form in response to pathogens and other damage-associated signals. The Nlrp1b inflammasome polymeric complex directly recruits pro-caspase-1 (proCASP1) independently of PYCARD/ASC. Interacts (via CARD domain) with CASP1 (via CARD domain); leading to CASP1 activation. Post-translationally, autocatalytically cleaved. Autocatalytic cleavage in FIIND region occurs constitutively, prior to activation signals, and is required for inflammasome activity (IL1B release), possibly by facilitating CASP1 binding. Both N- and C-terminal parts remain associated non-covalently. In terms of processing, ubiquitinated by the N-end rule pathway in response to pathogens and other damage-associated signals, leading to its degradation by the proteasome and subsequent release of the cleaved C-terminal part of the protein (NACHT, LRR and PYD domains-containing protein 1b, C-terminus), which polymerizes and forms the Nlrp1b inflammasome. (Microbial infection) Cleavage by B.anthracis lethal toxin (LT) endopeptidase promotes ubiquitination and degradation of the N-terminal part, releasing the cleaved C-terminal part of the protein (NACHT, LRR and PYD domains-containing protein 1b, C-terminus), which polymerizes and forms the Nlrp1b inflammasome. In terms of tissue distribution, expressed in macrophages.

It is found in the cytoplasm. The protein localises to the cytosol. It localises to the inflammasome. Activated by cleavage by B.anthracis lethal toxin (LT) endopeptidase. Cleavage by LT promotes ubiquitination and degradation of the N-terminal part, releasing the cleaved C-terminal part of the protein (NACHT, LRR and PYD domains-containing protein 1b, C-terminus), which polymerizes and forms the Nlrp1b inflammasome. Nlrp1b inflammasome is inhibited by DPP8 and DPP9, which sequester the C-terminal fragment of Nlrp1b (NACHT, LRR and PYD domains-containing protein 1b, C-terminus) in a ternary complex, thereby preventing Nlrp1b oligomerization and activation. Nlrp1b inflammasome is activated by Val-boroPro (Talabostat, PT-100), an inhibitor of dipeptidyl peptidases DPP8 and DPP9. Val-boroPro relieves inhibition of DPP8 and/or DPP9 by promoting disruption of the ternary complex, releasing its C-terminal part from autoinhibition. Activated by metabolic inhibitors, such as 2-deoxy-D-glucose and sodium azide. Not activated by muramyl dipeptide, nor by full-length bacterial peptidoglycan. Its function is as follows. Acts as the sensor component of the Nlrp1b inflammasome, which mediates inflammasome activation in response to various pathogen-associated signals, leading to subsequent pyroptosis. Inflammasomes are supramolecular complexes that assemble in the cytosol in response to pathogens and other damage-associated signals and play critical roles in innate immunity and inflammation. Acts as a recognition receptor (PRR): recognizes specific pathogens and other damage-associated signals, such as B.anthracis lethal toxin (LT) or Val-boroPro inhibitor, and mediates the formation of the inflammasome polymeric complex. In response to pathogen-associated signals, the N-terminal part of Nlrp1b is degraded by the proteasome, releasing the cleaved C-terminal part of the protein (NACHT, LRR and PYD domains-containing protein 1b, C-terminus), which polymerizes to initiate the formation of the inflammasome complex: the inflammasome directly recruits pro-caspase-1 (proCASP1) independently of PYCARD/ASC and promotes caspase-1 (CASP1) activation, which subsequently cleaves and activates inflammatory cytokines IL1B and IL18 and gasdermin-D (GSDMD), leading to pyroptosis. In the absence of GSDMD expression, the Nlrp1b inflammasome is able to recruit and activate CASP8, leading to activation of gasdermin-E (GSDME). Activation of Nlrp1b inflammasome is also required for HMGB1 secretion; the active cytokines and HMGB1 stimulate inflammatory responses. Primary mediator of macrophage susceptibility to B.anthracis LT: in response to B.anthracis infection, macrophages and dendritic cells release IL1B and undergo pyroptosis. This early inflammatory response to the toxin increases resistance to infection by B.anthracis spores. Constitutes the precursor of the Nlrp1b inflammasome, which mediates autoproteolytic processing within the FIIND domain to generate the N-terminal and C-terminal parts, which are associated non-covalently in absence of pathogens and other damage-associated signals. In terms of biological role, regulatory part that prevents formation of the Nlrp1b inflammasome: in absence of pathogens and other damage-associated signals, interacts with the C-terminal part of Nlrp1b (NACHT, LRR and PYD domains-containing protein 1b, C-terminus), preventing activation of the Nlrp1b inflammasome. In response to pathogen-associated signals, this part is ubiquitinated by the N-end rule pathway and degraded by the proteasome, releasing the cleaved C-terminal part of the protein, which polymerizes and forms the Nlrp1b inflammasome. Functionally, constitutes the active part of the Nlrp1b inflammasome. In absence of pathogens and other damage-associated signals, interacts with the N-terminal part of Nlrp1b (NACHT, LRR and PYD domains-containing protein 1b, N-terminus), preventing activation of the Nlrp1b inflammasome. In response to pathogen-associated signals, the N-terminal part of Nlrp1b is degraded by the proteasome, releasing this form, which polymerizes to form the Nlrp1b inflammasome complex: the Nlrp1b inflammasome complex then directly recruits pro-caspase-1 (proCASP1) and promotes caspase-1 (CASP1) activation, leading to gasdermin-D (GSDMD) cleavage and subsequent pyroptosis. In Mus musculus (Mouse), this protein is NACHT, LRR and PYD domains-containing protein 1b allele 5 (Nlrp1b).